A 210-amino-acid polypeptide reads, in one-letter code: Glutathione S-transferase-like protein FUS3 (210 aa).

The GST N-terminal domain maps to 1 to 74 (MPNARVFKIL…YVAQSGPQAS (74 aa)). Residues 80–206 (DAMSSAKIRQ…GKPNFIEKRR (127 aa)) enclose the GST C-terminal domain.

Belongs to the GST superfamily.

Glutathione S-transferase-like protein; part of the gene cluster that mediates the biosynthesis of the mycotoxin fusarin C. Within the cluster, FUS1, FUS2, FUS8 and FUS9 are sufficient for fusarin production. The other FUS cluster members are not essential for fusarin C biosynthesis. The sequence is that of Glutathione S-transferase-like protein FUS3 from Gibberella fujikuroi (strain CBS 195.34 / IMI 58289 / NRRL A-6831) (Bakanae and foot rot disease fungus).